The following is a 572-amino-acid chain: Acyl-coenzyme A synthetase ACSM2, mitochondrial (572 aa).

Residues 1-46 constitute a mitochondrion transit peptide; that stretch reads MHWLWKIPRLCTFWGTEMFHRTFHMNIKKLMPIQWGHQEVPAKFNF. Glutamine 139 contacts CoA. ATP-binding positions include 221-229, 359-364, aspartate 446, and arginine 461; these read TSGTSGPPK and EIYGQT. Residue threonine 364 participates in substrate binding. 469 to 471 serves as a coordination point for CoA; the sequence is SGY. Position 472 (arginine 472) interacts with substrate. CoA contacts are provided by residues arginine 501, lysine 532, and 540–542; that span reads YPR. ATP is bound at residue lysine 557.

The protein belongs to the ATP-dependent AMP-binding enzyme family. As to quaternary structure, monomer. Mg(2+) serves as cofactor. Requires Mn(2+) as cofactor. In terms of tissue distribution, detected in kidney, in proximal tubules.

It is found in the mitochondrion. The catalysed reaction is a medium-chain fatty acid + ATP + CoA = a medium-chain fatty acyl-CoA + AMP + diphosphate. The enzyme catalyses benzoate + ATP + CoA = benzoyl-CoA + AMP + diphosphate. It carries out the reaction hexanoate + ATP + CoA = hexanoyl-CoA + AMP + diphosphate. It catalyses the reaction butanoate + ATP + CoA = butanoyl-CoA + AMP + diphosphate. The catalysed reaction is octanoate + ATP + CoA = octanoyl-CoA + AMP + diphosphate. The enzyme catalyses decanoate + ATP + CoA = decanoyl-CoA + AMP + diphosphate. In terms of biological role, catalyzes the activation of fatty acids by CoA to produce an acyl-CoA, the first step in fatty acid metabolism. Capable of activating medium-chain fatty acids (e.g. butyric (C4) to decanoic (C10) acids), and certain carboxylate-containing xenobiotics, e.g. benzoate. This is Acyl-coenzyme A synthetase ACSM2, mitochondrial (Acsm2) from Rattus norvegicus (Rat).